Here is a 700-residue protein sequence, read N- to C-terminus: MAGIAMKLAKDREAAEGLGSHERAIKYLNQDYETLRNECLEAGALFQDPSFPALPSSLGFKELGPYSSKTRGIEWKRPTEICADPQFIIGGATRTDICQGALGDCWLLAAIASLTLNEEILARVVPLDQSFQENYAGIFHFQFWQYGEWVEVVVDDRLPTKDGELLFVHSAEGSEFWSALLEKAYAKINGCYEALSGGATTEGFEDFTGGIAEWYELRKPPPNLFKIIQKALEKGSLLGCSIDITSAADSEAVTYQKLVKGHAYSVTGAEEVESSGSLQKLIRIRNPWGQVEWTGKWNDNCPSWNTVDPEVRANLTERQEDGEFWMSFSDFLRHYSRLEICNLTPDTLTCDSYKKWKLTKMDGNWRRGSTAGGCRNYPNTFWMNPQYLIKLEEEDEDDEDGERGCTFLVGLIQKHRRRQRKMGEDMHTIGFGIYEVPEELTGQTNIHLSKNFFLTTRARERSDTFINLREVLNRFKLPPGEYVLVPSTFEPHKNGDFCIRVFSEKKADYQTVDDEIEANIEEIEANEEDIGDGFRRLFAQLAGEDAEISAFELQTILRRVLAKREDIKSDGFSIETCKIMVDMLDEDGSGKLGLKEFYILWTKIQKYQKIYREIDVDRSGTMNSYEMRKALEEAGFKLPCQLHQVIVARFADDELIIDFDNFVRCLVRLEILFKIFKQLDPENTGTIQLDLISWLSFSVL.

Ala-2 is subject to N-acetylalanine. A propeptide spans 2–19 (AGIAMKLAKDREAAEGLG) (anchors to the small subunit). One can recognise a Calpain catalytic domain in the interval 45-344 (LFQDPSFPAL…YSRLEICNLT (300 aa)). Residues Ile-89, Gly-91, and Asp-96 each coordinate Ca(2+). Cys-105 is a catalytic residue. Ca(2+) is bound by residues Glu-175, Gln-229, and Lys-230. Residues His-262 and Asn-286 contribute to the active site. Positions 292, 299, 319, and 323 each coordinate Ca(2+). Positions 345–514 (PDTLTCDSYK…KKADYQTVDD (170 aa)) are domain III. Positions 515–529 (EIEANIEEIEANEED) are linker. The segment at 530–700 (IGDGFRRLFA…LISWLSFSVL (171 aa)) is domain IV. Residues Ala-542, Asp-545, Glu-547, Glu-552, Asp-585, Asp-587, Ser-589, Lys-591, Glu-596, Asp-615, Asp-617, Ser-619, Thr-621, Glu-626, Asp-658, and Asn-661 each coordinate Ca(2+). EF-hand domains lie at 572–605 (FSIETCKIMVDMLDEDGSGKLGLKEFYILWTKIQ) and 602–637 (TKIQKYQKIYREIDVDRSGTMNSYEMRKALEEAGFK). The 34-residue stretch at 667–700 (VRLEILFKIFKQLDPENTGTIQLDLISWLSFSVL) folds into the EF-hand 3 domain.

This sequence belongs to the peptidase C2 family. In terms of assembly, forms a heterodimer with a small (regulatory) subunit (CAPNS1). Interacts with CPEB3; this leads to cleavage of CPEB3. It depends on Ca(2+) as a cofactor. In terms of tissue distribution, ubiquitous.

It localises to the cytoplasm. Its subcellular location is the cell membrane. The catalysed reaction is Broad endopeptidase specificity.. Activated by 200-1000 micromolar concentrations of calcium and inhibited by calpastatin. Calcium-regulated non-lysosomal thiol-protease which catalyze limited proteolysis of substrates involved in cytoskeletal remodeling and signal transduction. Proteolytically cleaves MYOC at 'Arg-226'. Proteolytically cleaves CPEB3 following neuronal stimulation which abolishes CPEB3 translational repressor activity, leading to translation of CPEB3 target mRNAs. The polypeptide is Calpain-2 catalytic subunit (Capn2) (Rattus norvegicus (Rat)).